The sequence spans 2567 residues: Highly reducing polyketide synthase sor1 (2567 aa).

Residues 14–436 (SEPIAIIGMS…GANAHIILED (423 aa)) enclose the Ketosynthase family 3 (KS3) domain. Active-site for beta-ketoacyl synthase activity residues include cysteine 187, histidine 322, and histidine 359. The malonyl-CoA:ACP transacylase (MAT) domain stretch occupies residues 550 to 841 (VFTGQGAQWW…VVEVGPHTAL (292 aa)). The segment at 939–1079 (HHLLGSLVEG…GLISIEFEAS (141 aa)) is N-terminal hotdog fold. The tract at residues 939-1249 (HHLLGSLVEG…GFSYQSLGRS (311 aa)) is dehydratase (DH) domain. Residues 939–1252 (HHLLGSLVEG…YQSLGRSVSL (314 aa)) form the PKS/mFAS DH domain. Catalysis depends on histidine 971, which acts as the Proton acceptor; for dehydratase activity. Residues 1095–1252 (YKRQIPPAQL…YQSLGRSVSL (158 aa)) are C-terminal hotdog fold. The active-site Proton donor; for dehydratase activity is aspartate 1161. The tract at residues 1426–1534 (LEIGASTGGI…RSLLKPGGTL (109 aa)) is methyltransferase (CMet) domain. Positions 1852 to 2163 (FLPELLVFGD…TEEETGKRVL (312 aa)) are enoyl reductase (ER) domain. Residues 2187–2369 (ASYLIVGGNG…AVSIDLSLVD (183 aa)) are ketoreductase (KR) domain. Residues 2481–2558 (EAISVVGSAV…QLVANVVDRS (78 aa)) enclose the Carrier domain. Position 2518 is an O-(pantetheine 4'-phosphoryl)serine (serine 2518).

It functions in the pathway secondary metabolite biosynthesis. In terms of biological role, highly reducing polyketide synthase; part of the SOR gene cluster that mediates the biosynthesis of sorbicillinoids, a diverse group of yellow secondary metabolites that restrict growth of competing pathogenic fungi but not of bacteria. Sorbicillinoids biosynthesis requires the action of two PKSs. The SOR cluster is required for the production of trichodimerol and dihydrotrichotetronin, with sor2 being sufficient for production of trichodimerol, but not dihydrotrichotetronin in the light. Sor1 iteratively combines three acetyl units and the growing chain is modified by the ketoacyl reductase subunit, and optional by the enoyl reductase subunit in the second cycle. The polyketide is then handed over to the PKS sor2, which adds three more acetyl units, and two methyl groups. Sor2 releases an aldehyde, which undergoes spontaneous cyclization resulting in the formation of sorbicillin or 2',3'-dihydrosorbicillin. The monooxygenase sor5 oxidizes sorbicillin and 2',3'-dihydrosorbicillin to 2',3'-dihydrosorbicillinol and sorbicillinol, respectively. The oxidoreductase sor8 further converts sorbicillinol into oxosorbicillinol. Sorbicillinol is the building block for the other sorbicillinoids such as disorbicillinol, bisvertinolon, dihydrobisvertinolone, and dihydrotrichotetronine. The polypeptide is Highly reducing polyketide synthase sor1 (Hypocrea jecorina (strain QM6a) (Trichoderma reesei)).